A 169-amino-acid polypeptide reads, in one-letter code: MARPIVVLVGPPGAGKSTIGRRLARALNADLVDSDELIEKATGKACGEVFSELGEPAFRELEAHHVAEALNHDGVVSLGGGAILTESTRELLREHDVVWIDVSVAEGVRRTAGERTRPVLAADDPVEHYRNLLETRRPLYEEVSTFRVRTNSRSPQQVVAEILHHLEDD.

Position 13–18 (13–18 (GAGKST)) interacts with ATP. Serine 17 serves as a coordination point for Mg(2+). The substrate site is built by aspartate 35, arginine 59, and glycine 80. Arginine 117 is an ATP binding site. Residue arginine 136 coordinates substrate. Arginine 153 is a binding site for ATP.

This sequence belongs to the shikimate kinase family. Monomer. Requires Mg(2+) as cofactor.

The protein localises to the cytoplasm. It catalyses the reaction shikimate + ATP = 3-phosphoshikimate + ADP + H(+). It functions in the pathway metabolic intermediate biosynthesis; chorismate biosynthesis; chorismate from D-erythrose 4-phosphate and phosphoenolpyruvate: step 5/7. Catalyzes the specific phosphorylation of the 3-hydroxyl group of shikimic acid using ATP as a cosubstrate. This is Shikimate kinase from Corynebacterium efficiens (strain DSM 44549 / YS-314 / AJ 12310 / JCM 11189 / NBRC 100395).